The primary structure comprises 119 residues: Beta-2-microglobulin (119 aa).

The signal sequence occupies residues 1–20 (MARFVVAALLVLLSLSGLEA). One can recognise an Ig-like C1-type domain in the interval 25 to 114 (PKIQVYSRHP…MTFPAPKTVK (90 aa)). Cys-45 and Cys-100 are disulfide-bonded.

This sequence belongs to the beta-2-microglobulin family. As to quaternary structure, heterodimer of an alpha chain and a beta chain. Beta-2-microglobulin is the beta-chain of major histocompatibility complex class I molecules.

It is found in the secreted. In terms of biological role, component of the class I major histocompatibility complex (MHC). Involved in the presentation of peptide antigens to the immune system. In Pithecia irrorata (Gray monk saki), this protein is Beta-2-microglobulin (B2M).